The primary structure comprises 177 residues: Iron-sulfur cluster assembly protein SufA (177 aa).

The N-terminal stretch at 1 to 18 (MTIHIFLCFLLILKIVNA) is a signal peptide. The [4Fe-4S] cluster site is built by Cys101, Cys169, and Cys171.

Belongs to the HesB/IscA family. As to quaternary structure, homodimer. Homotetramer formation is observed in vitro.

Its subcellular location is the plastid. It is found in the apicoplast. It participates in cofactor biosynthesis; iron-sulfur cluster biosynthesis. Its function is as follows. Participates in the sulfur mobilization (SUF) pathway for iron-sulfur (Fe-S) cluster biogenesis. Involved in the pre-assembly of [4Fe-4S] clusters and their transfer to target proteins. The sequence is that of Iron-sulfur cluster assembly protein SufA from Plasmodium falciparum (isolate 3D7).